A 319-amino-acid chain; its full sequence is ATP-dependent 6-phosphofructokinase (319 aa).

Gly11 contributes to the ATP binding site. 21–25 is a binding site for ADP; sequence RAVVR. ATP-binding positions include 72–73 and 102–105; these read RS and GDGS. Asp103 serves as a coordination point for Mg(2+). 125-127 provides a ligand contact to substrate; that stretch reads TID. Catalysis depends on Asp127, which acts as the Proton acceptor. Arg154 contributes to the ADP binding site. Residues Arg162 and 169–171 each bind substrate; that span reads MGR. Residues 185–187, Arg211, and 213–215 each bind ADP; these read GAE and KKH. Residues Glu222, Arg243, and 249-252 contribute to the substrate site; that span reads HVQR.

The protein belongs to the phosphofructokinase type A (PFKA) family. ATP-dependent PFK group I subfamily. Prokaryotic clade 'B1' sub-subfamily. In terms of assembly, homotetramer. Mg(2+) serves as cofactor.

The protein resides in the cytoplasm. It catalyses the reaction beta-D-fructose 6-phosphate + ATP = beta-D-fructose 1,6-bisphosphate + ADP + H(+). It functions in the pathway carbohydrate degradation; glycolysis; D-glyceraldehyde 3-phosphate and glycerone phosphate from D-glucose: step 3/4. With respect to regulation, allosterically activated by ADP and other diphosphonucleosides, and allosterically inhibited by phosphoenolpyruvate. Catalyzes the phosphorylation of D-fructose 6-phosphate to fructose 1,6-bisphosphate by ATP, the first committing step of glycolysis. The protein is ATP-dependent 6-phosphofructokinase of Natranaerobius thermophilus (strain ATCC BAA-1301 / DSM 18059 / JW/NM-WN-LF).